We begin with the raw amino-acid sequence, 381 residues long: Dihydroorotate dehydrogenase (quinone) (381 aa).

Residues 74–78 (AGFDK) and Thr-98 each bind FMN. Lys-78 serves as a coordination point for substrate. Residue 123-127 (NRMGF) participates in substrate binding. Residues Asn-152 and Asn-185 each contribute to the FMN site. Asn-185 is a substrate binding site. Ser-188 (nucleophile) is an active-site residue. Residue Asn-190 coordinates substrate. Lys-223 and Thr-251 together coordinate FMN. A substrate-binding site is contributed by 252-253 (NT). Residues Gly-289, Gly-318, and 339 to 340 (YT) contribute to the FMN site. The disordered stretch occupies residues 359 to 381 (RSSPPSPDVTLPPENTPVGQIQA).

The protein belongs to the dihydroorotate dehydrogenase family. Type 2 subfamily. In terms of assembly, monomer. The cofactor is FMN.

It is found in the cell membrane. It carries out the reaction (S)-dihydroorotate + a quinone = orotate + a quinol. The protein operates within pyrimidine metabolism; UMP biosynthesis via de novo pathway; orotate from (S)-dihydroorotate (quinone route): step 1/1. In terms of biological role, catalyzes the conversion of dihydroorotate to orotate with quinone as electron acceptor. This is Dihydroorotate dehydrogenase (quinone) from Synechococcus sp. (strain JA-2-3B'a(2-13)) (Cyanobacteria bacterium Yellowstone B-Prime).